The chain runs to 507 residues: Bifunctional purine biosynthesis protein PurH (507 aa).

Positions 1 to 144 (MKRALLSVSD…KNSDSVWAVV (144 aa)) constitute an MGS-like domain.

The protein belongs to the PurH family.

The catalysed reaction is (6R)-10-formyltetrahydrofolate + 5-amino-1-(5-phospho-beta-D-ribosyl)imidazole-4-carboxamide = 5-formamido-1-(5-phospho-D-ribosyl)imidazole-4-carboxamide + (6S)-5,6,7,8-tetrahydrofolate. The enzyme catalyses IMP + H2O = 5-formamido-1-(5-phospho-D-ribosyl)imidazole-4-carboxamide. The protein operates within purine metabolism; IMP biosynthesis via de novo pathway; 5-formamido-1-(5-phospho-D-ribosyl)imidazole-4-carboxamide from 5-amino-1-(5-phospho-D-ribosyl)imidazole-4-carboxamide (10-formyl THF route): step 1/1. It participates in purine metabolism; IMP biosynthesis via de novo pathway; IMP from 5-formamido-1-(5-phospho-D-ribosyl)imidazole-4-carboxamide: step 1/1. The chain is Bifunctional purine biosynthesis protein PurH from Lacticaseibacillus paracasei (strain ATCC 334 / BCRC 17002 / CCUG 31169 / CIP 107868 / KCTC 3260 / NRRL B-441) (Lactobacillus paracasei).